A 90-amino-acid chain; its full sequence is Small ribosomal subunit protein uS15c (90 aa).

This sequence belongs to the universal ribosomal protein uS15 family. In terms of assembly, part of the 30S ribosomal subunit.

It is found in the plastid. The protein resides in the chloroplast. The sequence is that of Small ribosomal subunit protein uS15c (rps15-A) from Lolium perenne (Perennial ryegrass).